The chain runs to 160 residues: ATP synthase subunit b 3 (160 aa).

The helical transmembrane segment at 5–25 threads the bilayer; the sequence is PTFWVLVAFVLFVAAVWRIAA.

The protein belongs to the ATPase B chain family. In terms of assembly, F-type ATPases have 2 components, F(1) - the catalytic core - and F(0) - the membrane proton channel. F(1) has five subunits: alpha(3), beta(3), gamma(1), delta(1), epsilon(1). F(0) has three main subunits: a(1), b(2) and c(10-14). The alpha and beta chains form an alternating ring which encloses part of the gamma chain. F(1) is attached to F(0) by a central stalk formed by the gamma and epsilon chains, while a peripheral stalk is formed by the delta and b chains.

It is found in the cell inner membrane. Functionally, f(1)F(0) ATP synthase produces ATP from ADP in the presence of a proton or sodium gradient. F-type ATPases consist of two structural domains, F(1) containing the extramembraneous catalytic core and F(0) containing the membrane proton channel, linked together by a central stalk and a peripheral stalk. During catalysis, ATP synthesis in the catalytic domain of F(1) is coupled via a rotary mechanism of the central stalk subunits to proton translocation. Component of the F(0) channel, it forms part of the peripheral stalk, linking F(1) to F(0). In Rhodospirillum centenum (strain ATCC 51521 / SW), this protein is ATP synthase subunit b 3.